A 272-amino-acid polypeptide reads, in one-letter code: Lectin-like protein At1g53070 (272 aa).

Positions 1–23 are cleaved as a signal peptide; the sequence is MKIQILCFTTLFLAIFTSQVTTA. The segment at 24 to 271 is legume-lectin like; the sequence is YKFKFDYFGN…RHEIWDWTFQ (248 aa). N-linked (GlcNAc...) asparagine glycosylation is found at Asn33, Asn84, and Asn134. Ser241 bears the Phosphoserine mark.

It belongs to the leguminous lectin family.

It is found in the secreted. The protein localises to the extracellular space. It localises to the apoplast. This Arabidopsis thaliana (Mouse-ear cress) protein is Lectin-like protein At1g53070.